The primary structure comprises 348 residues: MISVSRFLSPQFYAIPRSFVKMSASATQTAGEVSMGIKPPSHPTYDLKAVIKLALAEDAGHTGDVTCMATIPFDMEVEAYFLAKEDGIVAGVALADMIFEHVDPSLKVEWMRKDGDYVHKGLKFGKVSGNAHKIVVAERVLLNFMQRMSGIATLTKLMADAASPACILETRKTAPGLRLVDKWAVLIGGGRNHRMGLFDMVMIKDNHISAAGGIVNAVKSVDEYLKQKNLEMDVEVETRTLEEVKEVLEYASGSETRLTRIMLDNMVVPLENGDVDVTMLKDAVELINGRFETEASGNVTLETVHKIGQSGVTFISSGALTHSVKALDISLKIDTELALEVGRRTKRA.

Residues 1 to 41 (MISVSRFLSPQFYAIPRSFVKMSASATQTAGEVSMGIKPPS) constitute a chloroplast transit peptide. Substrate contacts are provided by residues Arg139, 170-172 (TRK), Arg194, Lys204, Glu237, Asp264, 296-298 (SGN), and 317-319 (SGA).

Belongs to the NadC/ModD family.

It localises to the plastid. The protein localises to the chloroplast. The enzyme catalyses nicotinate beta-D-ribonucleotide + CO2 + diphosphate = quinolinate + 5-phospho-alpha-D-ribose 1-diphosphate + 2 H(+). Its pathway is cofactor biosynthesis; NAD(+) biosynthesis; nicotinate D-ribonucleotide from quinolinate: step 1/1. Functionally, involved in the biosynthesis of NAD(+). Catalyzes the conversion of quinolate to nicotinate to nicotinate beta-D-ribonucleotide. In Arabidopsis thaliana (Mouse-ear cress), this protein is Nicotinate-nucleotide pyrophosphorylase [carboxylating], chloroplastic.